A 333-amino-acid chain; its full sequence is Arylacetonitrilase (333 aa).

Positions Val9 to Met284 constitute a CN hydrolase domain. Glu49 (proton acceptor) is an active-site residue. The active site involves Lys129. Residue Cys164 is the Nucleophile of the active site.

Belongs to the carbon-nitrogen hydrolase superfamily. Nitrilase family.

The catalysed reaction is a nitrile + 2 H2O = a carboxylate + NH4(+). It catalyses the reaction 4-chlorophenylacetonitrile + 2 H2O = 4-chlorophenylacetate + NH4(+). Its function is as follows. Nitrilase that hydrolyzes preferentially phenylacetonitrile, (R,S)-mandelonitrile, and 3-indolylacetonitrile. The protein is Arylacetonitrilase of Aspergillus oryzae (strain ATCC 42149 / RIB 40) (Yellow koji mold).